We begin with the raw amino-acid sequence, 264 residues long: Teichoic acids export ATP-binding protein TagH (264 aa).

An ABC transporter domain is found at 24–243 (IKDALIPKNK…YEQFLKDFKK (220 aa)). 57-64 (GINGSGKS) is an ATP binding site.

Belongs to the ABC transporter superfamily. Teichoic acids exporter (TC 3.A.1.104.1) family. The complex is composed of two ATP-binding proteins (TagH) and two transmembrane proteins (TagG).

It is found in the cell membrane. The enzyme catalyses ATP + H2O + teichoic acidSide 1 = ADP + phosphate + teichoic acidSide 2.. Its function is as follows. Part of the ABC transporter complex TagGH involved in teichoic acids export. Responsible for energy coupling to the transport system. The sequence is that of Teichoic acids export ATP-binding protein TagH from Staphylococcus haemolyticus (strain JCSC1435).